We begin with the raw amino-acid sequence, 500 residues long: Pentatricopeptide repeat-containing protein At1g05750, chloroplastic (500 aa).

Residues 1 to 54 (MGLLPVVGITSPALITHKNHANPKIQRHNQSTSETTVSWTSRINLLTRNGRLAE) constitute a chloroplast transit peptide. PPR repeat units lie at residues 35–69 (TTVS…GVEP), 70–106 (NHIT…GLDR), 108–138 (HVMV…MEDK), 139–173 (NSVT…DLIS), 174–204 (WTAM…GVKP), 205–239 (DYVA…DFKN), 240–270 (NVRV…MEKR), 271–305 (TVVS…GFKP), 306–336 (DAVT…MKCD), and 342–376 (RIEH…PNEV). The type E motif stretch occupies residues 377–453 (VIGSLLAACS…QPGFSSIEID (77 aa)). A type E(+) motif region spans residues 454 to 484 (DCMHVFMAGDNAHVETTYIREVLELISSDLR).

It belongs to the PPR family. PCMP-E subfamily.

The protein localises to the plastid. Its subcellular location is the chloroplast. This is Pentatricopeptide repeat-containing protein At1g05750, chloroplastic (PDE247) from Arabidopsis thaliana (Mouse-ear cress).